The chain runs to 252 residues: MNNLSPPSTVDILEQVYQVIQQRKSAPDPEASYVAKLFHKGDDAILKKVGEEATELVLAIKGRAARNEVAHEAADLIFHTLVGLAIMNIPPTEVMNVLSSRFGKTGLTRNQTPSVELEPSRRQFERRLHSKTIHLIFSSGITIDGLTRDISLDGMQLHVDYADKVRLLGEKGYFELSVQNKATFNANNLLVGLEIPTTMDNNPLMAAVHSARTYRFEFEIVRVTEDAIGLRIIGDKGMFSFALANEVFNDLM.

This sequence belongs to the PRA-PH family.

Its subcellular location is the cytoplasm. It catalyses the reaction 1-(5-phospho-beta-D-ribosyl)-ATP + H2O = 1-(5-phospho-beta-D-ribosyl)-5'-AMP + diphosphate + H(+). Its pathway is amino-acid biosynthesis; L-histidine biosynthesis; L-histidine from 5-phospho-alpha-D-ribose 1-diphosphate: step 2/9. This is Phosphoribosyl-ATP pyrophosphatase from Magnetococcus marinus (strain ATCC BAA-1437 / JCM 17883 / MC-1).